We begin with the raw amino-acid sequence, 245 residues long: 1-(5-phosphoribosyl)-5-[(5-phosphoribosylamino)methylideneamino] imidazole-4-carboxamide isomerase (245 aa).

D7 functions as the Proton acceptor in the catalytic mechanism. Catalysis depends on D129, which acts as the Proton donor.

The protein belongs to the HisA/HisF family.

The protein resides in the cytoplasm. The catalysed reaction is 1-(5-phospho-beta-D-ribosyl)-5-[(5-phospho-beta-D-ribosylamino)methylideneamino]imidazole-4-carboxamide = 5-[(5-phospho-1-deoxy-D-ribulos-1-ylimino)methylamino]-1-(5-phospho-beta-D-ribosyl)imidazole-4-carboxamide. The protein operates within amino-acid biosynthesis; L-histidine biosynthesis; L-histidine from 5-phospho-alpha-D-ribose 1-diphosphate: step 4/9. The chain is 1-(5-phosphoribosyl)-5-[(5-phosphoribosylamino)methylideneamino] imidazole-4-carboxamide isomerase from Enterobacter sp. (strain 638).